Here is a 146-residue protein sequence, read N- to C-terminus: Hemoglobin subunit beta (146 aa).

The 145-residue stretch at 2 to 146 (FLTAEEKGLV…VANALAHKYH (145 aa)) folds into the Globin domain. Position 44 is a phosphoserine (Ser-44). Lys-59 is subject to N6-acetyllysine. His-63 lines the heme b pocket. An N6-acetyllysine modification is found at Lys-82. Residue His-92 participates in heme b binding. Cys-93 is subject to S-nitrosocysteine. Position 144 is an N6-acetyllysine (Lys-144).

This sequence belongs to the globin family. In terms of assembly, heterotetramer of two alpha chains and two beta chains. In terms of tissue distribution, red blood cells.

Involved in oxygen transport from the lung to the various peripheral tissues. The polypeptide is Hemoglobin subunit beta (HBB) (Lynx lynx (Eurasian lynx)).